A 341-amino-acid polypeptide reads, in one-letter code: RNA 3'-terminal phosphate cyclase (341 aa).

ATP contacts are provided by residues Gln-102 and 283-287 (HLADQ). His-308 acts as the Tele-AMP-histidine intermediate in catalysis.

Belongs to the RNA 3'-terminal cyclase family. Type 1 subfamily.

It is found in the cytoplasm. It carries out the reaction a 3'-end 3'-phospho-ribonucleotide-RNA + ATP = a 3'-end 2',3'-cyclophospho-ribonucleotide-RNA + AMP + diphosphate. Catalyzes the conversion of 3'-phosphate to a 2',3'-cyclic phosphodiester at the end of RNA. The mechanism of action of the enzyme occurs in 3 steps: (A) adenylation of the enzyme by ATP; (B) transfer of adenylate to an RNA-N3'P to produce RNA-N3'PP5'A; (C) and attack of the adjacent 2'-hydroxyl on the 3'-phosphorus in the diester linkage to produce the cyclic end product. The biological role of this enzyme is unknown but it is likely to function in some aspects of cellular RNA processing. This Pseudomonas aeruginosa (strain LESB58) protein is RNA 3'-terminal phosphate cyclase.